Consider the following 228-residue polypeptide: Ornithine decarboxylase antizyme 1 (228 aa).

A disordered region spans residues 17–55 (REKEGDKPSATIHASRTMPLLSLHSRGGSSSESSRVSLH). Over residues 36-55 (LLSLHSRGGSSSESSRVSLH) the composition is skewed to low complexity.

Belongs to the ODC antizyme family. In terms of assembly, interacts with ODC1 and thereby sterically blocks ODC homodimerization. Forms a ternary complex with PSMB4 and OAZ1 before PSMB4 is incorporated into the 20S proteasome. Interacts with AZIN2; this interaction disrupts the interaction between the antizyme and ODC1. Interacts with FAM171A1.

In terms of biological role, ornithine decarboxylase (ODC) antizyme protein that negatively regulates ODC activity and intracellular polyamine biosynthesis and uptake in response to increased intracellular polyamine levels. Binds to ODC monomers, inhibiting the assembly of the functional ODC homodimer, and targets the monomers for ubiquitin-independent proteolytic destruction by the 26S proteasome. Triggers ODC degradation by inducing the exposure of a cryptic proteasome-interacting surface of ODC. Stabilizes AZIN2 by interfering with its ubiquitination. Also inhibits cellular uptake of polyamines by inactivating the polyamine uptake transporter. SMAD1/OAZ1/PSMB4 complex mediates the degradation of the CREBBP/EP300 repressor SNIP1. Involved in the translocation of AZIN2 from ER-Golgi intermediate compartment (ERGIC) to the cytosol. This chain is Ornithine decarboxylase antizyme 1 (OAZ1), found in Homo sapiens (Human).